The following is a 196-amino-acid chain: Interleukin-23 subunit alpha (196 aa).

The first 21 residues, 1-21, serve as a signal peptide directing secretion; sequence MLDCRAVIMLWLLPWVTQGLA.

This sequence belongs to the IL-6 superfamily. As to quaternary structure, heterodimer with IL12B; disulfide-linked. The heterodimer is known as interleukin IL-23. Interacts with IL23R; this interaction enables recruitment of IL12RB1. As to expression, secreted by activated dendritic cells (at protein level). Detected in various tissues with higher expression in polarized Th1 cells and activated macrophages.

It localises to the secreted. Associates with IL12B to form the IL-23 interleukin, a heterodimeric cytokine which functions in innate and adaptive immunity. IL-23 may constitute with IL-17 an acute response to infection in peripheral tissues. IL-23 binds to a heterodimeric receptor complex composed of IL12RB1 and IL23R, activates the Jak-Stat signaling cascade, stimulates memory rather than naive T-cells and promotes production of pro-inflammatory cytokines. IL-23 induces autoimmune inflammation and thus may be responsible for autoimmune inflammatory diseases and may be important for tumorigenesis. Its function is as follows. Associates with IL12B to form the pro-inflammatory cytokine IL-23 that plays different roles in innate and adaptive immunity. Released by antigen-presenting cells such as dendritic cells or macrophages, binds to a heterodimeric receptor complex composed of IL12RB1 and IL23R to activate JAK2 and TYK2 which then phosphorylate the receptor to form a docking site leading to the phosphorylation of STAT3 and STAT4. This process leads to activation of several pathways including p38 MAPK or NF-kappa-B and promotes the production of pro-inflammatory cytokines such as interleukin-17A/IL17A. In turn, participates in the early and effective intracellular bacterial clearance. Promotes the expansion and survival of T-helper 17 cells, a CD4-positive helper T-cell subset that produces IL-17, as well as other IL-17-producing cells. The chain is Interleukin-23 subunit alpha (Il23a) from Mus musculus (Mouse).